The chain runs to 445 residues: Transcription activator AFTR-1 (445 aa).

The zn(2)-C6 fungal-type DNA-binding region spans 17-44; the sequence is CDFCTQSKLRCNKNKPSCRRCTLQQQPC. The tract at residues 50 to 89 is disordered; the sequence is RRTGRPPKHPRKANDCQEANGQHGDQDPVTSTPGGSYQQQ. Basic residues predominate over residues 51-60; the sequence is RTGRPPKHPR. A compositionally biased stretch (polar residues) spans 77 to 89; that stretch reads PVTSTPGGSYQQQ.

The protein resides in the nucleus. Its function is as follows. Transcription factor that regulates the expression of the gene clusters that mediate the biosynthesis of the host-selective toxins (HSTs) AF-toxins responsible for Alternaria black spot of strawberry disease by the strawberry pathotype. On cellular level, AF-toxins affect plasma membrane of susceptible cells and cause a sudden increase in loss of K(+) after a few minutes of toxin treatment. The sequence is that of Transcription activator AFTR-1 from Alternaria alternata (Alternaria rot fungus).